Consider the following 110-residue polypeptide: uncharacterized protein (110 aa).

A disordered region spans residues 85-110 (ARKAERPSQGGKDYNGTAKSAQSTTV). Positions 101–110 (TAKSAQSTTV) are enriched in polar residues.

This is an uncharacterized protein from Saccharomyces cerevisiae (strain ATCC 204508 / S288c) (Baker's yeast).